A 147-amino-acid chain; its full sequence is Mucoricin (147 aa).

In terms of domain architecture, Ricin B-type lectin spans 4–143 (EEGRLFFIKS…VSANQRWELV (140 aa)).

Belongs to the ribosome-inactivating protein family. Type 1 RIP subfamily.

It localises to the secreted. It catalyses the reaction Endohydrolysis of the N-glycosidic bond at one specific adenosine on the 28S rRNA.. Its function is as follows. N-glycosylase that inhibits protein synthesis in the host by depurinating ribosomal rRNA, and thus acts as a ribosomal inactivating protein (RIP). Promotes vascular permeability in the host and induces necrosis and apoptosis of host alveolar epithelial cells. This is Mucoricin from Rhizopus delemar (strain RA 99-880 / ATCC MYA-4621 / FGSC 9543 / NRRL 43880) (Mucormycosis agent).